The primary structure comprises 371 residues: Putative glutamate--cysteine ligase 2 (371 aa).

This sequence belongs to the glutamate--cysteine ligase type 2 family. YbdK subfamily.

The enzyme catalyses L-cysteine + L-glutamate + ATP = gamma-L-glutamyl-L-cysteine + ADP + phosphate + H(+). ATP-dependent carboxylate-amine ligase which exhibits weak glutamate--cysteine ligase activity. The protein is Putative glutamate--cysteine ligase 2 of Burkholderia lata (strain ATCC 17760 / DSM 23089 / LMG 22485 / NCIMB 9086 / R18194 / 383).